A 332-amino-acid chain; its full sequence is BRISC and BRCA1-A complex member 1 (332 aa).

M1 is subject to N-acetylmethionine. Residues 1–88 (MEVAEPSCPT…PPPAPEVQVR (88 aa)) are disordered. The span at 10-23 (TEEEEEEEEEEEQS) shows a compositional bias: acidic residues. Phosphoserine occurs at positions 32, 52, and 60. Residues 70 to 83 (GAGPKPWQVPPPAP) show a composition bias toward pro residues. The segment at 98 to 301 (VIICLDLSEE…LELHNCMAKL (204 aa)) is VWFA-like.

The protein belongs to the BABAM1 family. In terms of assembly, component of the ARISC complex, at least composed of UIMC1/RAP80, ABRAXAS1, BRCC3/BRCC36, BABAM2 and BABAM1/NBA1. Component of the BRCA1-A complex, at least composed of BRCA1, BARD1, UIMC1/RAP80, ABRAXAS1, BRCC3/BRCC36, BABAM2 and BABAM1/NBA1. In the BRCA1-A complex, interacts directly with ABRAXAS1 and BABAM2. Component of the BRISC complex, at least composed of ABRAXAS2, BRCC3/BRCC36, BABAM2 and BABAM1/NBA1. Identified in a complex with SHMT2 and the other subunits of the BRISC complex.

The protein localises to the cytoplasm. It localises to the nucleus. Its function is as follows. Component of the BRCA1-A complex, a complex that specifically recognizes 'Lys-63'-linked ubiquitinated histones H2A and H2AX at DNA lesions sites, leading to target the BRCA1-BARD1 heterodimer to sites of DNA damage at double-strand breaks (DSBs). The BRCA1-A complex also possesses deubiquitinase activity that specifically removes 'Lys-63'-linked ubiquitin on histones H2A and H2AX. In the BRCA1-A complex, it is required for the complex integrity and its localization at DSBs. Component of the BRISC complex, a multiprotein complex that specifically cleaves 'Lys-63'-linked ubiquitin in various substrates. In these 2 complexes, it is probably required to maintain the stability of BABAM2 and help the 'Lys-63'-linked deubiquitinase activity mediated by BRCC3/BRCC36 component. The BRISC complex is required for normal mitotic spindle assembly and microtubule attachment to kinetochores via its role in deubiquitinating NUMA1. Plays a role in interferon signaling via its role in the deubiquitination of the interferon receptor IFNAR1; deubiquitination increases IFNAR1 activity by enhancing its stability and cell surface expression. Down-regulates the response to bacterial lipopolysaccharide (LPS) via its role in IFNAR1 deubiquitination. In Bos taurus (Bovine), this protein is BRISC and BRCA1-A complex member 1 (BABAM1).